The chain runs to 445 residues: Tubulin beta chain (445 aa).

GTP is bound by residues Gln-11, Glu-69, Ser-138, Gly-142, Thr-143, Gly-144, Asn-204, and Asn-226. A Mg(2+)-binding site is contributed by Glu-69.

The protein belongs to the tubulin family. In terms of assembly, dimer of alpha and beta chains. A typical microtubule is a hollow water-filled tube with an outer diameter of 25 nm and an inner diameter of 15 nM. Alpha-beta heterodimers associate head-to-tail to form protofilaments running lengthwise along the microtubule wall with the beta-tubulin subunit facing the microtubule plus end conferring a structural polarity. Microtubules usually have 13 protofilaments but different protofilament numbers can be found in some organisms and specialized cells. Mg(2+) serves as cofactor.

The protein resides in the cytoplasm. It localises to the cytoskeleton. Its function is as follows. Tubulin is the major constituent of microtubules, a cylinder consisting of laterally associated linear protofilaments composed of alpha- and beta-tubulin heterodimers. Microtubules grow by the addition of GTP-tubulin dimers to the microtubule end, where a stabilizing cap forms. Below the cap, tubulin dimers are in GDP-bound state, owing to GTPase activity of alpha-tubulin. This chain is Tubulin beta chain, found in Coprinopsis cinerea (strain Okayama-7 / 130 / ATCC MYA-4618 / FGSC 9003) (Inky cap fungus).